The chain runs to 518 residues: Envelope protein (518 aa).

The N-terminal stretch at 1–31 is a signal peptide; that stretch reads MSVNRSSIKSLLMVFMIVSSSLLAPVGGAAA. Topologically, residues 32–485 are extracellular; sequence DEFRTPAASD…IEDREPEAGG (454 aa). The N-linked (GlcNAc...) (hybrid) asparagine; by host glycan is linked to asparagine 213. Residues 486 to 506 form a helical membrane-spanning segment; the sequence is FFGSGSTDTMLVGLLALAGVL. The Cytoplasmic portion of the chain corresponds to 507–518; sequence LLAQSNNRGGRR.

Post-translationally, N-glycosylated by a pentasaccharide comprising glucose, glucuronic acid and a terminal 5-N-formyl-legionaminic acid residue.

The protein localises to the virion membrane. Its function is as follows. Envelope protein that may play a role in host-cell attachment and viral genome entry. In Halorubrum sp. PV6 (HRPV-1), this protein is Envelope protein.